The following is a 155-amino-acid chain: Troponin C, isoform 2 (155 aa).

EF-hand domains follow at residues 11–46 (EQIAVLQKAFNSFDHQKTGSIPTEMVADILRLMGQP), 47–82 (FDRQILDELIDEVDEDKSGRLEFEEFVQLAAKFIVE), 87–122 (AMQKELREAFRLYDKQGNGYIPTSCLKEILKELDDQ), and 123–155 (LTEQELDIMIEEIDSDGSGTVDFDEFMEMMTGE). Residues aspartate 60, aspartate 62, serine 64, arginine 66, and glutamate 71 each coordinate Ca(2+). Ca(2+) is bound by residues aspartate 136, aspartate 138, serine 140, threonine 142, and glutamate 147.

Belongs to the troponin C family. In terms of tissue distribution, accumulates almost exclusively in larval muscles.

The chain is Troponin C, isoform 2 (TpnC47D) from Drosophila melanogaster (Fruit fly).